The following is a 369-amino-acid chain: Biglycan (369 aa).

Positions 1–16 (MRPLWLLTLLLALSQA) are cleaved as a signal peptide. The propeptide occupies 17-37 (LPFEQKGFWDFTLDDGLLMMN). O-linked (Xyl...) (glycosaminoglycan) serine glycans are attached at residues Ser-42 and Ser-48. 2 disulfide bridges follow: Cys-64–Cys-70 and Cys-68–Cys-77. LRR repeat units lie at residues 83–103 (KTVPKEISPDTTLLDLQNNDI), 104–127 (SELRKDDFKGLQHLYALVLVNNKI), 128–151 (SKIHEKAFSPLRKLQKLYISKNHL), 152–172 (VEIPPNLPSSLVELRIHDNRI), 173–196 (RKVPKGVFSGLRNMNCIEMGGNPL), 197–221 (ENSGFEPGAFDGLKLNYLRISEAKL), 222–242 (TGIPKDLPETLNELHLDHNKI), 243–266 (QAIELEDLLRYSKLYRLGLGHNQI), 267–290 (RMIENGSLSFLPTLRELHLDNNKL), 291–313 (SRVPAGLPDLKLLQVVYLHSNNI), 314–343 (TKVGINDFCPMGFGVKRAYYNGISLFNNPV), and 344–369 (PYWEVQPATFRCVTDRLAIQFGNYKK). N-linked (GlcNAc...) asparagine glycans are attached at residues Asn-271 and Asn-312. Cys-322 and Cys-355 are disulfide-bonded.

It belongs to the small leucine-rich proteoglycan (SLRP) family. SLRP class I subfamily. In terms of assembly, homodimer. Forms a ternary complex with MFAP2 and ELN. In terms of processing, the two attached glycosaminoglycan chains can be either chondroitin sulfate or dermatan sulfate. In terms of tissue distribution, found in several connective tissues, especially in articular cartilages.

Its subcellular location is the secreted. The protein localises to the extracellular space. The protein resides in the extracellular matrix. May be involved in collagen fiber assembly. This is Biglycan (Bgn) from Rattus norvegicus (Rat).